The following is a 440-amino-acid chain: Thymidine phosphorylase (440 aa).

The protein belongs to the thymidine/pyrimidine-nucleoside phosphorylase family. Homodimer.

It catalyses the reaction thymidine + phosphate = 2-deoxy-alpha-D-ribose 1-phosphate + thymine. Its pathway is pyrimidine metabolism; dTMP biosynthesis via salvage pathway; dTMP from thymine: step 1/2. In terms of biological role, the enzymes which catalyze the reversible phosphorolysis of pyrimidine nucleosides are involved in the degradation of these compounds and in their utilization as carbon and energy sources, or in the rescue of pyrimidine bases for nucleotide synthesis. The chain is Thymidine phosphorylase from Enterobacter sp. (strain 638).